Consider the following 89-residue polypeptide: MTELSKPLRRTLVGRVVSDKMQKTVTVLVERQVKHPVIGKYVGQSKKYHAHDEAGTYKMGDTVEIAESKPISRTKSWVVTRLVEASKGI.

This sequence belongs to the universal ribosomal protein uS17 family. In terms of assembly, part of the 30S ribosomal subunit.

Functionally, one of the primary rRNA binding proteins, it binds specifically to the 5'-end of 16S ribosomal RNA. The chain is Small ribosomal subunit protein uS17 from Polynucleobacter asymbioticus (strain DSM 18221 / CIP 109841 / QLW-P1DMWA-1) (Polynucleobacter necessarius subsp. asymbioticus).